The following is a 107-amino-acid chain: Ubiquitin-related modifier 1 (107 aa).

At Gly107 the chain carries 1-thioglycine. A Glycyl lysine isopeptide (Gly-Lys) (interchain with K-? in acceptor proteins) cross-link involves residue Gly107.

It belongs to the URM1 family. Post-translationally, C-terminal thiocarboxylation occurs in 2 steps, it is first acyl-adenylated (-COAMP) via the hesA/moeB/thiF part of UBA4, then thiocarboxylated (-COSH) via the rhodanese domain of UBA4.

It localises to the cytoplasm. It functions in the pathway tRNA modification; 5-methoxycarbonylmethyl-2-thiouridine-tRNA biosynthesis. Functionally, acts as a sulfur carrier required for 2-thiolation of mcm(5)S(2)U at tRNA wobble positions of cytosolic tRNA(Lys), tRNA(Glu) and tRNA(Gln). Serves as sulfur donor in tRNA 2-thiolation reaction by being thiocarboxylated (-COSH) at its C-terminus by the MOCS3 homolog UBA4. The sulfur is then transferred to tRNA to form 2-thiolation of mcm(5)S(2)U. Prior mcm(5) tRNA modification by the elongator complex is required for 2-thiolation. Also acts as a ubiquitin-like protein (UBL) that is covalently conjugated via an isopeptide bond to lysine residues of target proteins such as AHP1. The thiocarboxylated form serves as substrate for conjugation and oxidative stress specifically induces the formation of UBL-protein conjugates. The sequence is that of Ubiquitin-related modifier 1 from Mycosarcoma maydis (Corn smut fungus).